The following is a 280-amino-acid chain: Bis(5'-nucleosyl)-tetraphosphatase, symmetrical (280 aa).

The protein belongs to the Ap4A hydrolase family.

It catalyses the reaction P(1),P(4)-bis(5'-adenosyl) tetraphosphate + H2O = 2 ADP + 2 H(+). In terms of biological role, hydrolyzes diadenosine 5',5'''-P1,P4-tetraphosphate to yield ADP. The polypeptide is Bis(5'-nucleosyl)-tetraphosphatase, symmetrical (Paracidovorax citrulli (strain AAC00-1) (Acidovorax citrulli)).